Here is a 240-residue protein sequence, read N- to C-terminus: UDP-2,3-diacylglucosamine hydrolase (240 aa).

Mn(2+)-binding residues include Asp9, His11, Asp43, Asn81, and His116. A substrate-binding site is contributed by 81–82; that stretch reads NR. Residues Asp124, Ser162, Lys166, Lys169, and His197 each coordinate substrate. His197 and His199 together coordinate Mn(2+).

The protein belongs to the LpxH family. Mn(2+) serves as cofactor.

Its subcellular location is the cell inner membrane. It carries out the reaction UDP-2-N,3-O-bis[(3R)-3-hydroxytetradecanoyl]-alpha-D-glucosamine + H2O = 2-N,3-O-bis[(3R)-3-hydroxytetradecanoyl]-alpha-D-glucosaminyl 1-phosphate + UMP + 2 H(+). The protein operates within glycolipid biosynthesis; lipid IV(A) biosynthesis; lipid IV(A) from (3R)-3-hydroxytetradecanoyl-[acyl-carrier-protein] and UDP-N-acetyl-alpha-D-glucosamine: step 4/6. In terms of biological role, hydrolyzes the pyrophosphate bond of UDP-2,3-diacylglucosamine to yield 2,3-diacylglucosamine 1-phosphate (lipid X) and UMP by catalyzing the attack of water at the alpha-P atom. Involved in the biosynthesis of lipid A, a phosphorylated glycolipid that anchors the lipopolysaccharide to the outer membrane of the cell. This chain is UDP-2,3-diacylglucosamine hydrolase, found in Neisseria meningitidis serogroup C (strain 053442).